Reading from the N-terminus, the 461-residue chain is Interleukin-1 receptor-associated kinase 4 (461 aa).

M1 is subject to N-acetylmethionine. In terms of domain architecture, Death spans 20-104 (RKLSDFIDPQ…APASLLLPDA (85 aa)). At K34 the chain carries N6-acetyllysine. Positions 187–455 (SVGGNKMGEG…PDIKKVQQLL (269 aa)) constitute a Protein kinase domain. ATP contacts are provided by residues 193-201 (MGEGGFGVV) and K214. D312 acts as the Proton acceptor in catalysis. ATP contacts are provided by residues 314–317 (KSAN) and D330. 2 positions are modified to phosphothreonine: T343 and T346. At S347 the chain carries Phosphoserine.

This sequence belongs to the protein kinase superfamily. TKL Ser/Thr protein kinase family. Pelle subfamily. As to quaternary structure, associates with MYD88 and IRAK2 to form a ternary complex called the Myddosome. Once phosphorylated, IRAK4 dissociates from the receptor complex and then associates with the TNF receptor-associated factor 6 (TRAF6), IRAK1, and PELI1; this intermediate complex is required for subsequent NF-kappa-B activation. Direct binding of SMAD6 to PELI1 prevents complex formation and hence negatively regulates IL1R-TLR signaling and eventually NF-kappa-B-mediated gene expression. Interacts with IL1RL1. Interacts (when phosphorylated) with IRAK1. May interact (when phosphorylated) with IRAK3. It depends on Mg(2+) as a cofactor. Post-translationally, phosphorylated.

Its subcellular location is the cytoplasm. It catalyses the reaction L-seryl-[protein] + ATP = O-phospho-L-seryl-[protein] + ADP + H(+). It carries out the reaction L-threonyl-[protein] + ATP = O-phospho-L-threonyl-[protein] + ADP + H(+). Its function is as follows. Serine/threonine-protein kinase that plays a critical role in initiating innate immune response against foreign pathogens. Involved in Toll-like receptor (TLR) and IL-1R signaling pathways. Is rapidly recruited by MYD88 to the receptor-signaling complex upon TLR activation to form the Myddosome together with IRAK2. Phosphorylates initially IRAK1, thus stimulating the kinase activity and intensive autophosphorylation of IRAK1. Phosphorylates E3 ubiquitin ligases Pellino proteins (PELI1, PELI2 and PELI3) to promote pellino-mediated polyubiquitination of IRAK1. Then, the ubiquitin-binding domain of IKBKG/NEMO binds to polyubiquitinated IRAK1 bringing together the IRAK1-MAP3K7/TAK1-TRAF6 complex and the NEMO-IKKA-IKKB complex. In turn, MAP3K7/TAK1 activates IKKs (CHUK/IKKA and IKBKB/IKKB) leading to NF-kappa-B nuclear translocation and activation. Alternatively, phosphorylates TIRAP to promote its ubiquitination and subsequent degradation. Phosphorylates NCF1 and regulates NADPH oxidase activation after LPS stimulation suggesting a similar mechanism during microbial infections. This chain is Interleukin-1 receptor-associated kinase 4 (IRAK4), found in Bos taurus (Bovine).